An 87-amino-acid polypeptide reads, in one-letter code: Large ribosomal subunit protein bL27 (87 aa).

Residues 1–21 (MAHKKGQGSTQNNRDSAGRRL) form a disordered region.

This sequence belongs to the bacterial ribosomal protein bL27 family.

The protein is Large ribosomal subunit protein bL27 of Nautilia profundicola (strain ATCC BAA-1463 / DSM 18972 / AmH).